The primary structure comprises 184 residues: MMTEGAARRVHIIQGEYKVLSDPNAVLSTILGSCVAACLRDPVAGIGGMNHFLLPGSATSPTSGGDATRYGVHLMELLINGLLKQGARRDRLEAKIFGGAKTISTFSNVGEQNAAFAMQFLRDEGIPVVGSSTGGDHGRKLEFWPVSGRARQYPLTGAETQRTVALEQRPAAPPKPVETSIEFF.

Belongs to the CheD family.

It catalyses the reaction L-glutaminyl-[protein] + H2O = L-glutamyl-[protein] + NH4(+). Probably deamidates glutamine residues to glutamate on methyl-accepting chemotaxis receptors (MCPs), playing an important role in chemotaxis. The chain is Probable chemoreceptor glutamine deamidase CheD from Rhizobium leguminosarum bv. trifolii (strain WSM2304).